A 251-amino-acid polypeptide reads, in one-letter code: GTP cyclohydrolase 1 type 2 homolog (251 aa).

A divalent metal cation contacts are provided by H63, H64, D101, H219, and E223.

Belongs to the GTP cyclohydrolase I type 2/NIF3 family. As to quaternary structure, homohexamer.

The chain is GTP cyclohydrolase 1 type 2 homolog from Pasteurella multocida (strain Pm70).